A 429-amino-acid polypeptide reads, in one-letter code: Adenylosuccinate synthetase (429 aa).

Residues 12 to 18 (GDEGKGK) and 40 to 42 (GHT) each bind GTP. The active-site Proton acceptor is D13. D13 and G40 together coordinate Mg(2+). Residues 13-16 (DEGK), 38-41 (NAGH), T129, R143, Q223, T238, and R302 contribute to the IMP site. The active-site Proton donor is H41. 298–304 (TVTGRPR) contributes to the substrate binding site. GTP-binding positions include R304, 330–332 (KLD), and 412–414 (STS).

The protein belongs to the adenylosuccinate synthetase family. Homodimer. It depends on Mg(2+) as a cofactor.

It is found in the cytoplasm. It carries out the reaction IMP + L-aspartate + GTP = N(6)-(1,2-dicarboxyethyl)-AMP + GDP + phosphate + 2 H(+). It participates in purine metabolism; AMP biosynthesis via de novo pathway; AMP from IMP: step 1/2. Functionally, plays an important role in the de novo pathway of purine nucleotide biosynthesis. Catalyzes the first committed step in the biosynthesis of AMP from IMP. This is Adenylosuccinate synthetase from Paramagnetospirillum magneticum (strain ATCC 700264 / AMB-1) (Magnetospirillum magneticum).